The chain runs to 241 residues: tRNA pseudouridine synthase A (241 aa).

Asp-51 functions as the Nucleophile in the catalytic mechanism. Substrate is bound at residue Tyr-110.

This sequence belongs to the tRNA pseudouridine synthase TruA family. As to quaternary structure, homodimer.

The enzyme catalyses uridine(38/39/40) in tRNA = pseudouridine(38/39/40) in tRNA. Functionally, formation of pseudouridine at positions 38, 39 and 40 in the anticodon stem and loop of transfer RNAs. In Campylobacter jejuni subsp. jejuni serotype O:23/36 (strain 81-176), this protein is tRNA pseudouridine synthase A.